The following is a 355-amino-acid chain: U5 small nuclear ribonucleoprotein 40 kDa protein (355 aa).

7 WD repeats span residues 60–99 (GHKG…INYS), 103–142 (GHKG…LIKR), 145–185 (EHSG…STHL), 187–226 (QHKY…DPLY), 230–269 (SHQD…PPNR), 280–319 (NFEK…LQYC), and 322–355 (GHSG…EIKP).

Component of the pre-catalytic and catalytic spliceosome complexes. Component of the postcatalytic spliceosome P complex. Part of the U5 snRNP complex. Component of the U4/U6-U5 tri-snRNP complex.

The protein resides in the nucleus. Required for pre-mRNA splicing as component of the activated spliceosome. Component of the U5 small nuclear ribonucleoprotein (snRNP) complex and the U4/U6-U5 tri-snRNP complex, building blocks of the spliceosome. The protein is U5 small nuclear ribonucleoprotein 40 kDa protein (snrnp40) of Dictyostelium discoideum (Social amoeba).